The following is a 192-amino-acid chain: ATP-dependent Clp protease proteolytic subunit 1 (192 aa).

Ser92 functions as the Nucleophile in the catalytic mechanism. The active site involves His117.

Belongs to the peptidase S14 family. In terms of assembly, fourteen ClpP subunits assemble into 2 heptameric rings which stack back to back to give a disk-like structure with a central cavity, resembling the structure of eukaryotic proteasomes.

It is found in the cytoplasm. The catalysed reaction is Hydrolysis of proteins to small peptides in the presence of ATP and magnesium. alpha-casein is the usual test substrate. In the absence of ATP, only oligopeptides shorter than five residues are hydrolyzed (such as succinyl-Leu-Tyr-|-NHMec, and Leu-Tyr-Leu-|-Tyr-Trp, in which cleavage of the -Tyr-|-Leu- and -Tyr-|-Trp bonds also occurs).. Its function is as follows. Cleaves peptides in various proteins in a process that requires ATP hydrolysis. Has a chymotrypsin-like activity. Plays a major role in the degradation of misfolded proteins. This chain is ATP-dependent Clp protease proteolytic subunit 1, found in Chlamydia trachomatis serovar D (strain ATCC VR-885 / DSM 19411 / UW-3/Cx).